The chain runs to 427 residues: Arginine biosynthesis bifunctional protein ArgJ (427 aa).

6 residues coordinate substrate: threonine 174, lysine 200, threonine 211, glutamate 291, asparagine 422, and threonine 427. Threonine 211 acts as the Nucleophile in catalysis.

This sequence belongs to the ArgJ family. In terms of assembly, heterotetramer of two alpha and two beta chains.

Its subcellular location is the cytoplasm. The enzyme catalyses N(2)-acetyl-L-ornithine + L-glutamate = N-acetyl-L-glutamate + L-ornithine. The catalysed reaction is L-glutamate + acetyl-CoA = N-acetyl-L-glutamate + CoA + H(+). Its pathway is amino-acid biosynthesis; L-arginine biosynthesis; L-ornithine and N-acetyl-L-glutamate from L-glutamate and N(2)-acetyl-L-ornithine (cyclic): step 1/1. The protein operates within amino-acid biosynthesis; L-arginine biosynthesis; N(2)-acetyl-L-ornithine from L-glutamate: step 1/4. Functionally, catalyzes two activities which are involved in the cyclic version of arginine biosynthesis: the synthesis of N-acetylglutamate from glutamate and acetyl-CoA as the acetyl donor, and of ornithine by transacetylation between N(2)-acetylornithine and glutamate. The polypeptide is Arginine biosynthesis bifunctional protein ArgJ (Prochlorococcus marinus (strain MIT 9313)).